A 284-amino-acid chain; its full sequence is 2-dehydro-3-deoxyphosphooctonate aldolase (284 aa).

The protein belongs to the KdsA family.

The protein resides in the cytoplasm. It carries out the reaction D-arabinose 5-phosphate + phosphoenolpyruvate + H2O = 3-deoxy-alpha-D-manno-2-octulosonate-8-phosphate + phosphate. The protein operates within carbohydrate biosynthesis; 3-deoxy-D-manno-octulosonate biosynthesis; 3-deoxy-D-manno-octulosonate from D-ribulose 5-phosphate: step 2/3. It functions in the pathway bacterial outer membrane biogenesis; lipopolysaccharide biosynthesis. In Salmonella enteritidis PT4 (strain P125109), this protein is 2-dehydro-3-deoxyphosphooctonate aldolase.